The primary structure comprises 196 residues: UMP-CMP kinase (196 aa).

13–18 is a binding site for ATP; the sequence is GAGKGT. Residues 33 to 63 are NMP; sequence SAGDLLRDERKKPDSQYGELIESYIRDGRIV. A ribonucleoside 5'-phosphate is bound by residues Arg-39, 61-63, and 93-96; these read RIV and GFPR. A CMP-binding site is contributed by Asn-100. Positions 133–143 are LID; it reads ERGKSSGRSDD. An ATP-binding site is contributed by Arg-134. A ribonucleoside 5'-phosphate is bound by residues Arg-140 and Arg-151. Lys-179 lines the ATP pocket.

It belongs to the adenylate kinase family. UMP-CMP kinase subfamily. In terms of assembly, monomer. Mg(2+) serves as cofactor.

It localises to the cytoplasm. The protein localises to the nucleus. The enzyme catalyses CMP + ATP = CDP + ADP. It catalyses the reaction dCMP + ATP = dCDP + ADP. It carries out the reaction UMP + ATP = UDP + ADP. The catalysed reaction is a 2'-deoxyribonucleoside 5'-diphosphate + ATP = a 2'-deoxyribonucleoside 5'-triphosphate + ADP. The enzyme catalyses a ribonucleoside 5'-diphosphate + ATP = a ribonucleoside 5'-triphosphate + ADP. Catalyzes the phosphorylation of pyrimidine nucleoside monophosphates at the expense of ATP. Plays an important role in de novo pyrimidine nucleotide biosynthesis. Has preference for UMP and CMP as phosphate acceptors. Also displays broad nucleoside diphosphate kinase activity. This Xenopus tropicalis (Western clawed frog) protein is UMP-CMP kinase (cmpk1).